The following is a 230-amino-acid chain: Oxygen-evolving enhancer protein 3-2, chloroplastic (230 aa).

Residues 1-49 (MAQAVTSMAGLRGASQAVLEGSLQINGSNRLNISRVSVGSQRTGLVIRA) constitute a chloroplast transit peptide. Residues 50 to 82 (QQNVSVPESSRRSVIGLVAAGLAGGSFVKAVFA) constitute a thylakoid transit peptide. Position 125 is a phosphoserine (S125). Residue T195 is modified to Phosphothreonine. Y215 is subject to Phosphotyrosine. S216 is modified (phosphoserine). At T218 the chain carries Phosphothreonine.

Belongs to the PsbQ family.

The protein localises to the plastid. It localises to the chloroplast thylakoid membrane. In terms of biological role, required for photosystem II assembly/stability and photoautotrophic growth under low light conditions. The chain is Oxygen-evolving enhancer protein 3-2, chloroplastic (PSBQ2) from Arabidopsis thaliana (Mouse-ear cress).